The following is a 479-amino-acid chain: NADH-quinone oxidoreductase subunit N (479 aa).

The next 14 membrane-spanning stretches (helical) occupy residues Met-3–Ile-23, Ile-40–Ile-60, Ile-77–Ala-97, His-102–Ala-122, Phe-125–Phe-145, Tyr-159–Gly-179, Met-200–Ile-220, Ala-234–Leu-254, Phe-268–Phe-288, Phe-299–Ser-319, Ile-327–Ile-347, Ser-373–Ile-393, Glu-409–Val-429, and Leu-452–Gly-472.

This sequence belongs to the complex I subunit 2 family. NDH-1 is composed of 14 different subunits. Subunits NuoA, H, J, K, L, M, N constitute the membrane sector of the complex.

It localises to the cell inner membrane. It catalyses the reaction a quinone + NADH + 5 H(+)(in) = a quinol + NAD(+) + 4 H(+)(out). Its function is as follows. NDH-1 shuttles electrons from NADH, via FMN and iron-sulfur (Fe-S) centers, to quinones in the respiratory chain. The immediate electron acceptor for the enzyme in this species is believed to be ubiquinone. Couples the redox reaction to proton translocation (for every two electrons transferred, four hydrogen ions are translocated across the cytoplasmic membrane), and thus conserves the redox energy in a proton gradient. This chain is NADH-quinone oxidoreductase subunit N, found in Orientia tsutsugamushi (strain Ikeda) (Rickettsia tsutsugamushi).